The following is a 427-amino-acid chain: Probable protein phosphatase 2C 64 (427 aa).

The tract at residues 1–36 (MGNCVARSGTAVDAGGDGGEDGKRRRRRWKAPREDQ) is disordered. A PPM-type phosphatase domain is found at 53-331 (TATVYTQQGR…DDCAVVCLYL (279 aa)). 4 residues coordinate Mn(2+): Asp-89, Gly-90, Asp-276, and Asp-322.

This sequence belongs to the PP2C family. It depends on Mg(2+) as a cofactor. Requires Mn(2+) as cofactor.

It carries out the reaction O-phospho-L-seryl-[protein] + H2O = L-seryl-[protein] + phosphate. The enzyme catalyses O-phospho-L-threonyl-[protein] + H2O = L-threonyl-[protein] + phosphate. In Oryza sativa subsp. japonica (Rice), this protein is Probable protein phosphatase 2C 64.